A 156-amino-acid chain; its full sequence is Regulatory protein RecX (156 aa).

This sequence belongs to the RecX family.

The protein resides in the cytoplasm. Functionally, modulates RecA activity. This chain is Regulatory protein RecX, found in Pseudomonas putida (strain ATCC 700007 / DSM 6899 / JCM 31910 / BCRC 17059 / LMG 24140 / F1).